Here is a 248-residue protein sequence, read N- to C-terminus: Coenzyme F420:L-glutamate ligase (248 aa).

Residues 15–18, 45–46, and K50 each bind GTP; these read IPLI and ET. D115 is a binding site for a divalent metal cation. N118 lines the GTP pocket. 3 residues coordinate a divalent metal cation: D155, S156, and Q213. 211–218 lines the GTP pocket; that stretch reads MGQSDEGI.

Belongs to the CofE family. In terms of assembly, homodimer. It depends on Mg(2+) as a cofactor. Mn(2+) is required as a cofactor. Requires K(+) as cofactor.

It carries out the reaction oxidized coenzyme F420-0 + GTP + L-glutamate = oxidized coenzyme F420-1 + GDP + phosphate + H(+). It catalyses the reaction oxidized coenzyme F420-1 + GTP + L-glutamate = oxidized coenzyme F420-2 + GDP + phosphate + H(+). It functions in the pathway cofactor biosynthesis; coenzyme F420 biosynthesis. Its function is as follows. Catalyzes the GTP-dependent successive addition of two or more gamma-linked L-glutamates to the L-lactyl phosphodiester of 7,8-didemethyl-8-hydroxy-5-deazariboflavin (F420-0) to form coenzyme F420-0-glutamyl-glutamate (F420-2) or polyglutamated F420 derivatives. The polypeptide is Coenzyme F420:L-glutamate ligase (Methanococcus maripaludis (strain C6 / ATCC BAA-1332)).